Reading from the N-terminus, the 418-residue chain is MGSTTLLKESGPREVFCGLTSIVWLHRRMPDAFFLVVGSRTCAHLIQSAAGVMIFAEPRFGTAILEERDLAGLADAHEELDRVVNDLLARRPEIRTLFLVGSCPSEVIKLDLARVAERLNGQLQGGVRVLNYSGSGIETTFTQGEDGALKAMVPLMPNSNEAQLLLVGTMANAVEDRLKHLFERLGIPSVSSLPPRQSTDLPSVGPGTRVLLTQPYLTDTARELKDRGAEILQAPFPLGAEGSRLWMEAAAQAFGINGSHVATILEPLMVRAQKALSPYKEQLAGKRIFLMPESQLEIPLARFLHRECGMELVEVGVPYLNRDMMQSELELLPPNTQVMEGQHVEKQLDRVREQRPDLVVCGMGLANPLEAEEIATKWSIELIFSPIHGIDQAADLAELFARPLHRRDLLNNQLLVSV.

C17, C42, and C103 together coordinate [4Fe-4S] cluster.

The protein belongs to the BchN/ChlN family. As to quaternary structure, protochlorophyllide reductase is composed of three subunits; ChlL, ChlN and ChlB. Forms a heterotetramer of two ChlB and two ChlN subunits. [4Fe-4S] cluster is required as a cofactor.

The enzyme catalyses chlorophyllide a + oxidized 2[4Fe-4S]-[ferredoxin] + 2 ADP + 2 phosphate = protochlorophyllide a + reduced 2[4Fe-4S]-[ferredoxin] + 2 ATP + 2 H2O. It participates in porphyrin-containing compound metabolism; chlorophyll biosynthesis (light-independent). Component of the dark-operative protochlorophyllide reductase (DPOR) that uses Mg-ATP and reduced ferredoxin to reduce ring D of protochlorophyllide (Pchlide) to form chlorophyllide a (Chlide). This reaction is light-independent. The NB-protein (ChlN-ChlB) is the catalytic component of the complex. The polypeptide is Light-independent protochlorophyllide reductase subunit N (Prochlorococcus marinus (strain MIT 9303)).